A 506-amino-acid polypeptide reads, in one-letter code: 2-isopropylmalate synthase (506 aa).

A Pyruvate carboxyltransferase domain is found at 4–266 (ILFMDTTLRD…EPSITLKEIK (263 aa)). 4 residues coordinate Mn(2+): D13, H201, H203, and N237. The segment at 390 to 506 (NITQLQVHFV…KLKSFIQLVK (117 aa)) is regulatory domain.

It belongs to the alpha-IPM synthase/homocitrate synthase family. LeuA type 1 subfamily. In terms of assembly, homodimer. Requires Mn(2+) as cofactor.

It is found in the cytoplasm. It carries out the reaction 3-methyl-2-oxobutanoate + acetyl-CoA + H2O = (2S)-2-isopropylmalate + CoA + H(+). It functions in the pathway amino-acid biosynthesis; L-leucine biosynthesis; L-leucine from 3-methyl-2-oxobutanoate: step 1/4. Functionally, catalyzes the condensation of the acetyl group of acetyl-CoA with 3-methyl-2-oxobutanoate (2-ketoisovalerate) to form 3-carboxy-3-hydroxy-4-methylpentanoate (2-isopropylmalate). In Bacillus thuringiensis subsp. konkukian (strain 97-27), this protein is 2-isopropylmalate synthase.